The primary structure comprises 260 residues: 5'-nucleotidase SurE (260 aa).

Residues Asp-13, Asp-14, Ser-44, and Asn-102 each coordinate a divalent metal cation.

Belongs to the SurE nucleotidase family. A divalent metal cation serves as cofactor.

It localises to the cytoplasm. It carries out the reaction a ribonucleoside 5'-phosphate + H2O = a ribonucleoside + phosphate. Functionally, nucleotidase that shows phosphatase activity on nucleoside 5'-monophosphates. The chain is 5'-nucleotidase SurE from Christiangramia forsetii (strain DSM 17595 / CGMCC 1.15422 / KT0803) (Gramella forsetii).